The primary structure comprises 160 residues: Cytochrome b6-f complex subunit 4 (160 aa).

Transmembrane regions (helical) follow at residues 36–56, 96–116, and 131–151; these read IFYM…GLAV, LGVL…FIKI, and TVFL…ALPI.

Belongs to the cytochrome b family. PetD subfamily. As to quaternary structure, the 4 large subunits of the cytochrome b6-f complex are cytochrome b6, subunit IV (17 kDa polypeptide, petD), cytochrome f and the Rieske protein, while the 4 small subunits are petG, petL, petM and petN. The complex functions as a dimer.

It localises to the plastid. The protein resides in the chloroplast thylakoid membrane. Its function is as follows. Component of the cytochrome b6-f complex, which mediates electron transfer between photosystem II (PSII) and photosystem I (PSI), cyclic electron flow around PSI, and state transitions. The protein is Cytochrome b6-f complex subunit 4 of Auxenochlorella protothecoides (Green microalga).